Reading from the N-terminus, the 760-residue chain is Prolyl endopeptidase FAP (760 aa).

Over 1–4 the chain is Cytoplasmic; it reads MKTW. Residues 5 to 25 traverse the membrane as a helical; Signal-anchor for type II membrane protein segment; it reads VKIVFGVATSAVLALLVMCIV. Topologically, residues 26 to 760 are extracellular; it reads LRPSRVHNSE…FLKQCFSLSD (735 aa). N-linked (GlcNAc...) asparagine glycans are attached at residues asparagine 49, asparagine 92, and asparagine 99. Substrate contacts are provided by glutamate 203 and glutamate 204. N-linked (GlcNAc...) asparagine glycans are attached at residues asparagine 227 and asparagine 314. Disulfide bonds link cysteine 321–cysteine 332, cysteine 438–cysteine 441, and cysteine 448–cysteine 466. Serine 624 (charge relay system) is an active-site residue. Cysteine 643 and cysteine 755 form a disulfide bridge. N-linked (GlcNAc...) asparagine glycosylation occurs at asparagine 679. Active-site charge relay system residues include aspartate 702 and histidine 734.

The protein belongs to the peptidase S9B family. Homodimer; homodimerization is required for activity of both plasma membrane and soluble forms. The monomer is inactive. Heterodimer with DPP4. Interacts with PLAUR; the interaction occurs at the cell surface of invadopodia membranes. Interacts with ITGB1. Interacts with ITGA3. Associates with integrin alpha-3/beta-1; the association occurs in a collagen-dependent manner at the cell surface of invadopodia membranes. N-glycosylated. Post-translationally, the N-terminus may be blocked. Expressed in adipose tissue. Expressed in the dermal fibroblasts in the fetal skin. Expressed in the granulation tissue of healing wounds and on reactive stromal fibroblast in epithelial cancers. Expressed in activated fibroblast-like synoviocytes from inflamed synovial tissues. Expressed in activated hepatic stellate cells (HSC) and myofibroblasts from cirrhotic liver, but not detected in normal liver. Expressed in glioma cells (at protein level). Expressed in glioblastomas and glioma cells. Isoform 1 and isoform 2 are expressed in melanoma, carcinoma and fibroblast cell lines.

It is found in the cell surface. The protein resides in the cell membrane. It localises to the cell projection. The protein localises to the lamellipodium membrane. Its subcellular location is the invadopodium membrane. It is found in the ruffle membrane. The protein resides in the membrane. It localises to the secreted. The protein localises to the cytoplasm. It carries out the reaction Hydrolysis of Pro-|-Xaa &gt;&gt; Ala-|-Xaa in oligopeptides.. The enzyme catalyses Release of an N-terminal dipeptide, Xaa-Yaa-|-Zaa-, from a polypeptide, preferentially when Yaa is Pro, provided Zaa is neither Pro nor hydroxyproline.. Its activity is regulated as follows. Gelatinase activity is inhibited by serine-protease inhibitors, such as phenylmethylsulfonyl fluoride (PMSF), 4-(2-aminoethyl)-benzenesulfonyl fluoride hydrochloride (AEBSF), 4-amidino phenylsulfonyl fluoride (APSF) and diisopropyl fluorophosphate (DFP), N-ethylmaleimide (NEM) and phenylmethylsulfonyl fluoride (PMSF). Dipeptidyl peptidase activity is inhibited by 2,2'-azino-bis(3-ethylbenzthiazoline-6-sulfonic acid), diisopropylfluorophosphate (DFP). Prolyl endopeptidase activity is inhibited by the boronic acid peptide Ac-Gly-BoroPro, Ac-Gly-Pro-chloromethyl ketone and Thr-Ser-Gly-chloromethyl ketone. Its function is as follows. Cell surface glycoprotein serine protease that participates in extracellular matrix degradation and involved in many cellular processes including tissue remodeling, fibrosis, wound healing, inflammation and tumor growth. Both plasma membrane and soluble forms exhibit post-proline cleaving endopeptidase activity, with a marked preference for Ala/Ser-Gly-Pro-Ser/Asn/Ala consensus sequences, on substrate such as alpha-2-antiplasmin SERPINF2 and SPRY2. Degrade also gelatin, heat-denatured type I collagen, but not native collagen type I and IV, vitronectin, tenascin, laminin, fibronectin, fibrin or casein. Also has dipeptidyl peptidase activity, exhibiting the ability to hydrolyze the prolyl bond two residues from the N-terminus of synthetic dipeptide substrates provided that the penultimate residue is proline, with a preference for Ala-Pro, Ile-Pro, Gly-Pro, Arg-Pro and Pro-Pro. Natural neuropeptide hormones for dipeptidyl peptidase are the neuropeptide Y (NPY), peptide YY (PYY), substance P (TAC1) and brain natriuretic peptide 32 (NPPB). The plasma membrane form, in association with either DPP4, PLAUR or integrins, is involved in the pericellular proteolysis of the extracellular matrix (ECM), and hence promotes cell adhesion, migration and invasion through the ECM. Plays a role in tissue remodeling during development and wound healing. Participates in the cell invasiveness towards the ECM in malignant melanoma cancers. Enhances tumor growth progression by increasing angiogenesis, collagen fiber degradation and apoptosis and by reducing antitumor response of the immune system. Promotes glioma cell invasion through the brain parenchyma by degrading the proteoglycan brevican. Acts as a tumor suppressor in melanocytic cells through regulation of cell proliferation and survival in a serine protease activity-independent manner. The polypeptide is Prolyl endopeptidase FAP (Homo sapiens (Human)).